Here is a 367-residue protein sequence, read N- to C-terminus: MVRLVLIIFFVYTIILSIGSINCIDNNNLVTNQAALFVFGDSLFDAGNNNYINTVSSFRSNIWPYGQTNFKFPTGRLSDGPEKAWLPSIPPNLQPNNGNNQFTYGVSFASAGAGALAESFLGMVINLGTQLNNFKDVEKSLRSELGDAETKRVFSRAVYLFHIGANDYFYPFSANSSTFKSNSKEKFVDFVIGNITFVIEEVYKMGGRKFGFLNVGPYECSPNSLIRDRTKIGSCFKPVAELIDMHNKKFPDVLRRLQRQLSGFRYALHDYHTSLSERINSPSKYGFKEGKKACCGSGPLRGINTCGNRIGPSQGYGLCENVTDYLFYDSSHLTEKAHRQIAELIWNGPPNVTRPYNLKALFELRLT.

The signal sequence occupies residues 1-23; that stretch reads MVRLVLIIFFVYTIILSIGSINC. Ser42 functions as the Nucleophile in the catalytic mechanism. 3 N-linked (GlcNAc...) asparagine glycosylation sites follow: Asn175, Asn194, and Asn321. Residues Asp329 and His332 contribute to the active site. Residue Asn351 is glycosylated (N-linked (GlcNAc...) asparagine).

The protein belongs to the 'GDSL' lipolytic enzyme family.

It localises to the secreted. The polypeptide is GDSL esterase/lipase 3 (GLIP3) (Arabidopsis thaliana (Mouse-ear cress)).